Consider the following 319-residue polypeptide: Acetyl-coenzyme A carboxylase carboxyl transferase subunit alpha (319 aa).

The CoA carboxyltransferase C-terminal domain occupies 35–296 (DLEKEIKQLE…KQRLLEQLKE (262 aa)).

It belongs to the AccA family. Acetyl-CoA carboxylase is a heterohexamer composed of biotin carboxyl carrier protein (AccB), biotin carboxylase (AccC) and two subunits each of ACCase subunit alpha (AccA) and ACCase subunit beta (AccD).

Its subcellular location is the cytoplasm. It carries out the reaction N(6)-carboxybiotinyl-L-lysyl-[protein] + acetyl-CoA = N(6)-biotinyl-L-lysyl-[protein] + malonyl-CoA. The protein operates within lipid metabolism; malonyl-CoA biosynthesis; malonyl-CoA from acetyl-CoA: step 1/1. In terms of biological role, component of the acetyl coenzyme A carboxylase (ACC) complex. First, biotin carboxylase catalyzes the carboxylation of biotin on its carrier protein (BCCP) and then the CO(2) group is transferred by the carboxyltransferase to acetyl-CoA to form malonyl-CoA. The sequence is that of Acetyl-coenzyme A carboxylase carboxyl transferase subunit alpha from Aliivibrio fischeri (strain ATCC 700601 / ES114) (Vibrio fischeri).